The primary structure comprises 95 residues: Aspartyl/glutamyl-tRNA(Asn/Gln) amidotransferase subunit C (95 aa).

The protein belongs to the GatC family. As to quaternary structure, heterotrimer of A, B and C subunits.

It carries out the reaction L-glutamyl-tRNA(Gln) + L-glutamine + ATP + H2O = L-glutaminyl-tRNA(Gln) + L-glutamate + ADP + phosphate + H(+). It catalyses the reaction L-aspartyl-tRNA(Asn) + L-glutamine + ATP + H2O = L-asparaginyl-tRNA(Asn) + L-glutamate + ADP + phosphate + 2 H(+). In terms of biological role, allows the formation of correctly charged Asn-tRNA(Asn) or Gln-tRNA(Gln) through the transamidation of misacylated Asp-tRNA(Asn) or Glu-tRNA(Gln) in organisms which lack either or both of asparaginyl-tRNA or glutaminyl-tRNA synthetases. The reaction takes place in the presence of glutamine and ATP through an activated phospho-Asp-tRNA(Asn) or phospho-Glu-tRNA(Gln). In Cytophaga hutchinsonii (strain ATCC 33406 / DSM 1761 / CIP 103989 / NBRC 15051 / NCIMB 9469 / D465), this protein is Aspartyl/glutamyl-tRNA(Asn/Gln) amidotransferase subunit C.